The chain runs to 503 residues: D-alanine--D-alanyl carrier protein ligase (503 aa).

151–152 is a binding site for ATP; it reads TS. Aspartate 196 is a D-alanine binding site. 291–296 serves as a coordination point for ATP; it reads NTYGPT. Valine 300 is a binding site for D-alanine. Residues aspartate 382 and lysine 491 each coordinate ATP. Lysine 491 contacts D-alanine.

It belongs to the ATP-dependent AMP-binding enzyme family. DltA subfamily.

It localises to the cytoplasm. It catalyses the reaction holo-[D-alanyl-carrier protein] + D-alanine + ATP = D-alanyl-[D-alanyl-carrier protein] + AMP + diphosphate. It participates in cell wall biogenesis; lipoteichoic acid biosynthesis. Its function is as follows. Catalyzes the first step in the D-alanylation of lipoteichoic acid (LTA), the activation of D-alanine and its transfer onto the D-alanyl carrier protein (Dcp) DltC. In an ATP-dependent two-step reaction, forms a high energy D-alanyl-AMP intermediate, followed by transfer of the D-alanyl residue as a thiol ester to the phosphopantheinyl prosthetic group of the Dcp. D-alanylation of LTA plays an important role in modulating the properties of the cell wall in Gram-positive bacteria, influencing the net charge of the cell wall. The protein is D-alanine--D-alanyl carrier protein ligase of Bacillus velezensis (strain DSM 23117 / BGSC 10A6 / LMG 26770 / FZB42) (Bacillus amyloliquefaciens subsp. plantarum).